The following is a 133-amino-acid chain: MPPKTRGAVRKPRKKDKKNIALGQAHIKSTFNNTIVSITDPNGAVISWASAGEVGFKGSRKSTPFAAQMAAEAAAKRAQEHGLKKVDVFVKGPGSGRETAIRSLQAAGLEVGSIQDVTPAAHNGCRPPKRRRV.

The interval 1-23 (MPPKTRGAVRKPRKKDKKNIALG) is disordered. A compositionally biased stretch (basic residues) spans 7 to 17 (GAVRKPRKKDK).

The protein belongs to the universal ribosomal protein uS11 family. In terms of assembly, part of the 30S ribosomal subunit. Interacts with proteins S7 and S18. Binds to IF-3.

In terms of biological role, located on the platform of the 30S subunit, it bridges several disparate RNA helices of the 16S rRNA. Forms part of the Shine-Dalgarno cleft in the 70S ribosome. The polypeptide is Small ribosomal subunit protein uS11 (Arthrobacter sp. (strain FB24)).